A 456-amino-acid polypeptide reads, in one-letter code: Ribosomal protein uS12 methylthiotransferase RimO (456 aa).

One can recognise an MTTase N-terminal domain in the interval 11–126 (PKVGFVSLGC…VMQAVHTHLP (116 aa)). Residues Cys-20, Cys-56, Cys-85, Cys-157, Cys-161, and Cys-164 each contribute to the [4Fe-4S] cluster site. The 242-residue stretch at 143–384 (LTPKHYAYLK…MEVAEEVSAR (242 aa)) folds into the Radical SAM core domain. A TRAM domain is found at 387–456 (QRKVGQTLRV…DGHDLWGEVA (70 aa)).

Belongs to the methylthiotransferase family. RimO subfamily. [4Fe-4S] cluster is required as a cofactor.

Its subcellular location is the cytoplasm. The catalysed reaction is L-aspartate(89)-[ribosomal protein uS12]-hydrogen + (sulfur carrier)-SH + AH2 + 2 S-adenosyl-L-methionine = 3-methylsulfanyl-L-aspartate(89)-[ribosomal protein uS12]-hydrogen + (sulfur carrier)-H + 5'-deoxyadenosine + L-methionine + A + S-adenosyl-L-homocysteine + 2 H(+). Functionally, catalyzes the methylthiolation of an aspartic acid residue of ribosomal protein uS12. The sequence is that of Ribosomal protein uS12 methylthiotransferase RimO from Cupriavidus metallidurans (strain ATCC 43123 / DSM 2839 / NBRC 102507 / CH34) (Ralstonia metallidurans).